Reading from the N-terminus, the 522-residue chain is Hydroxymethylglutaryl-CoA synthase, cytoplasmic (522 aa).

(3S)-3-hydroxy-3-methylglutaryl-CoA-binding residues include aspartate 43 and alanine 44. The active-site Proton donor/acceptor is the glutamate 95. Residues cysteine 129, asparagine 167, threonine 171, serine 221, histidine 264, lysine 273, asparagine 344, and serine 378 each coordinate (3S)-3-hydroxy-3-methylglutaryl-CoA. Cysteine 129 serves as the catalytic Acyl-thioester intermediate. The Proton donor/acceptor role is filled by histidine 264.

Belongs to the thiolase-like superfamily. HMG-CoA synthase family. Homodimer.

The protein resides in the cytoplasm. The enzyme catalyses acetoacetyl-CoA + acetyl-CoA + H2O = (3S)-3-hydroxy-3-methylglutaryl-CoA + CoA + H(+). The protein operates within metabolic intermediate biosynthesis; (R)-mevalonate biosynthesis; (R)-mevalonate from acetyl-CoA: step 2/3. Functionally, catalyzes the condensation of acetyl-CoA with acetoacetyl-CoA to form HMG-CoA, which is converted by HMG-CoA reductase (HMGCR) into mevalonate, a precursor for cholesterol synthesis. In Gallus gallus (Chicken), this protein is Hydroxymethylglutaryl-CoA synthase, cytoplasmic (HMGCS1).